A 433-amino-acid chain; its full sequence is MTDILNYNKSEEIFSAAQQLMPGGVSSPVRAFKSVGGQPIVFDRVKGPFAWDIDGNRYIDYIGSWGPAICGHAHPEVTTALQEAIEKGTSFGAPCVLENKLAEMVIDAVPSVEMVRFVNSGTEACMAVLRLMRAFTGRDKVIKFDGCYHGHADMFLVKAGSGVATLGLPDSPGVPRTTTANTLTAPYNDLEAVKKLFSENPDAISGVILEPIVGNAGFITPEPGFLEGLRELTTENGSLLVFDEVMTGFRISYGGAQEKFGVTPDLTTLGKVIGGGLPVGAYGGKKEIMSMVAPSGPVYQAGTLSGNPLAMTAGIKTLELLKQDGTYDKLDSTTSRLIEGIIQSAENNGIAINGGSISGMFGFFLCDGPVRNFEEAKTNNSELFGKLHREMLQRGIYLAPSPFEAGFTSLAHSEDEIDQTIEAFDESFNAIKN.

The residue at position 271 (Lys-271) is an N6-(pyridoxal phosphate)lysine.

The protein belongs to the class-III pyridoxal-phosphate-dependent aminotransferase family. HemL subfamily. Homodimer. Requires pyridoxal 5'-phosphate as cofactor.

The protein resides in the cytoplasm. The enzyme catalyses (S)-4-amino-5-oxopentanoate = 5-aminolevulinate. It participates in porphyrin-containing compound metabolism; protoporphyrin-IX biosynthesis; 5-aminolevulinate from L-glutamyl-tRNA(Glu): step 2/2. The protein operates within porphyrin-containing compound metabolism; chlorophyll biosynthesis. In Prochlorococcus marinus (strain MIT 9215), this protein is Glutamate-1-semialdehyde 2,1-aminomutase.